Reading from the N-terminus, the 147-residue chain is Putative fibroblast growth factor 1 (147 aa).

Asn25 serves as a coordination point for heparin. A heparin-binding region spans residues 117-133 (KKNGKMKRGPRTHIGQK).

It belongs to the heparin-binding growth factors family.

The protein localises to the secreted. The protein resides in the cytoplasm. It localises to the cell cortex. It is found in the cytosol. Its subcellular location is the nucleus. Plays an important role in the regulation of cell survival, cell division, angiogenesis, cell differentiation and cell migration. Functions as a potent mitogen in vitro. Acts as a ligand for FGFR1 and integrins. Binds to FGFR1 in the presence of heparin leading to FGFR1 dimerization and activation via sequential autophosphorylation on tyrosine residues which act as docking sites for interacting proteins, leading to the activation of several signaling cascades. Binds to integrins. Its binding to integrins and subsequent ternary complex formation with integrins and FGFR1 are essential for FGF1 signaling. The protein is Putative fibroblast growth factor 1 (fgf1) of Danio rerio (Zebrafish).